The chain runs to 240 residues: uncharacterized protein (240 aa).

It localises to the mitochondrion. This is an uncharacterized protein from Arabidopsis thaliana (Mouse-ear cress).